Here is a 466-residue protein sequence, read N- to C-terminus: Asparagine--tRNA ligase (466 aa).

The protein belongs to the class-II aminoacyl-tRNA synthetase family. In terms of assembly, homodimer.

Its subcellular location is the cytoplasm. It catalyses the reaction tRNA(Asn) + L-asparagine + ATP = L-asparaginyl-tRNA(Asn) + AMP + diphosphate + H(+). The sequence is that of Asparagine--tRNA ligase from Shewanella oneidensis (strain ATCC 700550 / JCM 31522 / CIP 106686 / LMG 19005 / NCIMB 14063 / MR-1).